An 833-amino-acid chain; its full sequence is Mannosyl-oligosaccharide glucosidase (833 aa).

Topologically, residues 1-10 are cytoplasmic; sequence MLISKSKMFK. A helical; Signal-anchor for type II membrane protein membrane pass occupies residues 11–28; the sequence is TFWILTSIVLLASATVDI. Residues 29–833 are Lumenal-facing; the sequence is SKLQEFEEYQ…ALVVNILGRF (805 aa). The substrate site is built by asparagine 42 and asparagine 122. Asparagine 42, asparagine 122, and asparagine 135 each carry an N-linked (GlcNAc...) asparagine glycan. Glutamate 143 is a substrate binding site. The active-site Proton donor is aspartate 601. The cysteines at positions 669 and 685 are disulfide-linked. The N-linked (GlcNAc...) asparagine glycan is linked to asparagine 787. Glutamate 804 acts as the Proton acceptor in catalysis.

It belongs to the glycosyl hydrolase 63 family. Post-translationally, N-glycosylated.

It is found in the endoplasmic reticulum membrane. The catalysed reaction is N(4)-(alpha-D-Glc-(1-&gt;2)-alpha-D-Glc-(1-&gt;3)-alpha-D-Glc-(1-&gt;3)-alpha-D-Man-(1-&gt;2)-alpha-D-Man-(1-&gt;2)-alpha-D-Man-(1-&gt;3)-[alpha-D-Man-(1-&gt;2)-alpha-D-Man-(1-&gt;3)-[alpha-D-Man-(1-&gt;2)-alpha-D-Man-(1-&gt;6)]-alpha-D-Man-(1-&gt;6)]-beta-D-Man-(1-&gt;4)-beta-D-GlcNAc-(1-&gt;4)-beta-D-GlcNAc)-L-asparaginyl-[protein] + H2O = N(4)-(alpha-D-Glc-(1-&gt;3)-alpha-D-Glc-(1-&gt;3)-alpha-D-Man-(1-&gt;2)-alpha-D-Man-(1-&gt;2)-alpha-D-Man-(1-&gt;3)-[alpha-D-Man-(1-&gt;2)-alpha-D-Man-(1-&gt;3)-[alpha-D-Man-(1-&gt;2)-alpha-D-Man-(1-&gt;6)]-alpha-D-Man-(1-&gt;6)]-beta-D-Man-(1-&gt;4)-beta-D-GlcNAc-(1-&gt;4)-beta-D-GlcNAc)-L-asparaginyl-[protein] + beta-D-glucose. The protein operates within glycan metabolism; N-glycan degradation. With respect to regulation, miglitol is an effective inhibitor at 1 mM. Its function is as follows. Cleaves the distal alpha 1,2-linked glucose residue from the Glc(3)Man(9)GlcNAc(2) oligosaccharide precursor highly specifically. Seems to play a role in beta-1,6-glucan synthesis. The protein is Mannosyl-oligosaccharide glucosidase (CWH41) of Saccharomyces cerevisiae (strain ATCC 204508 / S288c) (Baker's yeast).